We begin with the raw amino-acid sequence, 91 residues long: MSSRSRSRASSAARITDEQIGDLVSKLQALLPEARLRSNDRVPSARVLQETCSYIRSLHREVDDLSERLAELLAAADVSTAQAAVIRGLLM.

In terms of domain architecture, bHLH spans arginine 4–leucine 58.

The protein belongs to the bHLH protein family.

Atypical and probable non DNA-binding bHLH transcription factor that integrates multiple signaling pathways to regulate cell elongation and plant development. This Oryza sativa subsp. indica (Rice) protein is Transcription factor ILI7 (ILI7).